We begin with the raw amino-acid sequence, 358 residues long: UDP-N-acetylglucosamine--N-acetylmuramyl-(pentapeptide) pyrophosphoryl-undecaprenol N-acetylglucosamine transferase (358 aa).

UDP-N-acetyl-alpha-D-glucosamine-binding positions include Thr12–Gly14, Arg165, Ser195, and Gln290.

This sequence belongs to the glycosyltransferase 28 family. MurG subfamily.

The protein localises to the cell membrane. The enzyme catalyses di-trans,octa-cis-undecaprenyl diphospho-N-acetyl-alpha-D-muramoyl-L-alanyl-D-glutamyl-meso-2,6-diaminopimeloyl-D-alanyl-D-alanine + UDP-N-acetyl-alpha-D-glucosamine = di-trans,octa-cis-undecaprenyl diphospho-[N-acetyl-alpha-D-glucosaminyl-(1-&gt;4)]-N-acetyl-alpha-D-muramoyl-L-alanyl-D-glutamyl-meso-2,6-diaminopimeloyl-D-alanyl-D-alanine + UDP + H(+). Its pathway is cell wall biogenesis; peptidoglycan biosynthesis. Cell wall formation. Catalyzes the transfer of a GlcNAc subunit on undecaprenyl-pyrophosphoryl-MurNAc-pentapeptide (lipid intermediate I) to form undecaprenyl-pyrophosphoryl-MurNAc-(pentapeptide)GlcNAc (lipid intermediate II). This Clostridium tetani (strain Massachusetts / E88) protein is UDP-N-acetylglucosamine--N-acetylmuramyl-(pentapeptide) pyrophosphoryl-undecaprenol N-acetylglucosamine transferase.